The following is a 345-amino-acid chain: uncharacterized protein (345 aa).

The protein belongs to the transketolase family. It depends on thiamine diphosphate as a cofactor.

This is an uncharacterized protein from Sinorhizobium fredii (strain NBRC 101917 / NGR234).